The following is a 703-amino-acid chain: Elongation factor G (703 aa).

In terms of domain architecture, tr-type G spans 9 to 292 (ERTRNIGIMA…AVVDYLPGPL (284 aa)). Residues 18–25 (AHIDAGKT), 91–95 (DTPGH), and 145–148 (NKMD) each bind GTP.

This sequence belongs to the TRAFAC class translation factor GTPase superfamily. Classic translation factor GTPase family. EF-G/EF-2 subfamily.

The protein localises to the cytoplasm. Functionally, catalyzes the GTP-dependent ribosomal translocation step during translation elongation. During this step, the ribosome changes from the pre-translocational (PRE) to the post-translocational (POST) state as the newly formed A-site-bound peptidyl-tRNA and P-site-bound deacylated tRNA move to the P and E sites, respectively. Catalyzes the coordinated movement of the two tRNA molecules, the mRNA and conformational changes in the ribosome. This chain is Elongation factor G, found in Leuconostoc citreum (strain KM20).